Reading from the N-terminus, the 433-residue chain is GTPase Der (433 aa).

EngA-type G domains lie at 5 to 167 and 174 to 349; these read KKVL…GEVG and IKVG…DQLE. Residues 11-18, 58-62, 119-122, 180-187, 227-231, and 292-295 contribute to the GTP site; these read GRPNVGKS, DTGGF, NKVD, GKPNSGKS, DTAGI, and SKWD. Residues 349 to 429 form the KH-like domain; it reads ELKTSTPDLN…PILVELKEKI (81 aa).

It belongs to the TRAFAC class TrmE-Era-EngA-EngB-Septin-like GTPase superfamily. EngA (Der) GTPase family. In terms of assembly, associates with the 50S ribosomal subunit.

GTPase that plays an essential role in the late steps of ribosome biogenesis. The protein is GTPase Der of Borreliella burgdorferi (strain ATCC 35210 / DSM 4680 / CIP 102532 / B31) (Borrelia burgdorferi).